We begin with the raw amino-acid sequence, 350 residues long: UDP-3-O-acylglucosamine N-acyltransferase (350 aa).

Residue histidine 251 is the Proton acceptor of the active site.

Belongs to the transferase hexapeptide repeat family. LpxD subfamily. Homotrimer.

It carries out the reaction a UDP-3-O-[(3R)-3-hydroxyacyl]-alpha-D-glucosamine + a (3R)-hydroxyacyl-[ACP] = a UDP-2-N,3-O-bis[(3R)-3-hydroxyacyl]-alpha-D-glucosamine + holo-[ACP] + H(+). Its pathway is bacterial outer membrane biogenesis; LPS lipid A biosynthesis. Its function is as follows. Catalyzes the N-acylation of UDP-3-O-acylglucosamine using 3-hydroxyacyl-ACP as the acyl donor. Is involved in the biosynthesis of lipid A, a phosphorylated glycolipid that anchors the lipopolysaccharide to the outer membrane of the cell. This Prochlorococcus marinus (strain NATL2A) protein is UDP-3-O-acylglucosamine N-acyltransferase.